The chain runs to 326 residues: Aldo-keto reductase family 1 member D1 (326 aa).

Residues 22-26 and aspartate 53 each bind NADP(+); that span reads GLGTY. Residue tyrosine 26 coordinates substrate. Substrate contacts are provided by tyrosine 58, tryptophan 89, glutamate 120, and tyrosine 132. Tyrosine 58 functions as the Proton donor in the catalytic mechanism. NADP(+)-binding positions include 169 to 170, glutamine 193, and 219 to 224; these read SN and YSPLGT. Tryptophan 230 serves as a coordination point for substrate. 273–283 lines the NADP(+) pocket; that stretch reads KSFNPERIKEN.

It belongs to the aldo/keto reductase family.

It is found in the cytoplasm. The enzyme catalyses 5beta-cholestan-3-one + NADP(+) = cholest-4-en-3-one + NADPH + H(+). It catalyses the reaction 4,5beta-dihydrocortisone + NADP(+) = cortisone + NADPH + H(+). The catalysed reaction is cortisol + NADPH + H(+) = 5beta-dihydrocortisol + NADP(+). It carries out the reaction corticosterone + NADPH + H(+) = 5beta-dihydrocorticosterone + NADP(+). The enzyme catalyses 7alpha,12alpha-dihydroxycholest-4-en-3-one + NADPH + H(+) = 7alpha,12alpha-dihydroxy-5beta-cholestan-3-one + NADP(+). It catalyses the reaction 7alpha-hydroxycholest-4-en-3-one + NADPH + H(+) = 7alpha-hydroxy-5beta-cholestan-3-one + NADP(+). The catalysed reaction is epitestosterone + NADPH + H(+) = 5beta-dihydroepitestosterone + NADP(+). It carries out the reaction androst-4-ene-3,17-dione + NADPH + H(+) = 5beta-androstane-3,17-dione + NADP(+). The enzyme catalyses progesterone + NADPH + H(+) = 5beta-pregnan-3,20-dione + NADP(+). It catalyses the reaction 21-hydroxyprogesterone + NADPH + H(+) = 5beta-dihydrodeoxycorticosterone + NADP(+). The catalysed reaction is aldosterone + NADPH + H(+) = 5beta-dihydroaldosterone + NADP(+). It carries out the reaction 17beta-hydroxyandrosta-1,4-dien-3-one + NADPH + H(+) = 17beta-hydroxy-5beta-androst-1-en-3-one + NADP(+). The enzyme catalyses 17beta-hydroxyestr-4-en-3-one + NADPH + H(+) = 17beta-hydroxy-5beta-estran-3-one + NADP(+). It catalyses the reaction 5beta-dihydrotestosterone + NADP(+) = testosterone + NADPH + H(+). The catalysed reaction is androst-4-ene-3,11,17-trione + NADPH + H(+) = 17beta-hydroxyandrost-4-ene-3,11-dione + NADP(+). Its activity is regulated as follows. Subject to inhibition by high substrate concentrations. Inhibited by testosterone concentrations above 10 uM. Inhibited by the primary and secondary bile acids chenodeoxycholic acid and ursodeoxycholic acid. In terms of biological role, catalyzes the stereospecific NADPH-dependent reduction of the C4-C5 double bond of bile acid intermediates and steroid hormones carrying a delta(4)-3-one structure to yield an A/B cis-ring junction. This cis-configuration is crucial for bile acid biosynthesis and plays important roles in steroid metabolism. Capable of reducing a broad range of delta-(4)-3-ketosteroids from C18 (such as, 17beta-hydroxyestr-4-en-3-one) to C27 (such as, 7alpha-hydroxycholest-4-en-3-one). This chain is Aldo-keto reductase family 1 member D1 (AKR1D1), found in Oryctolagus cuniculus (Rabbit).